The chain runs to 203 residues: Cold-regulated 413 plasma membrane protein 2 (203 aa).

Residues Met-1 to Gly-43 lie on the Extracellular side of the membrane. A helical transmembrane segment spans residues Leu-44–Ile-64. Residues Leu-65–Met-74 are Cytoplasmic-facing. A helical transmembrane segment spans residues Leu-75–Leu-95. At Ser-96–Asp-98 the chain is on the extracellular side. A helical membrane pass occupies residues Val-99–Pro-119. A topological domain (cytoplasmic) is located at residue Asp-120. Residues Trp-121 to His-141 form a helical membrane-spanning segment. The Extracellular segment spans residues His-142 to Arg-144. Residues Gly-145–Ile-165 form a helical membrane-spanning segment. Residues Arg-166 to Arg-179 lie on the Cytoplasmic side of the membrane. The helical transmembrane segment at Gly-180–Val-200 threads the bilayer. The Extracellular segment spans residues Arg-201–Met-203.

It belongs to the Cold-regulated 413 protein family.

It is found in the cell membrane. This Arabidopsis thaliana (Mouse-ear cress) protein is Cold-regulated 413 plasma membrane protein 2 (COR413PM2).